Here is a 421-residue protein sequence, read N- to C-terminus: D-amino acid dehydrogenase (421 aa).

3–17 contacts FAD; the sequence is VLVLGGGVVGVASAY.

Belongs to the DadA oxidoreductase family. Requires FAD as cofactor.

The enzyme catalyses a D-alpha-amino acid + A + H2O = a 2-oxocarboxylate + AH2 + NH4(+). The protein operates within amino-acid degradation; D-alanine degradation; NH(3) and pyruvate from D-alanine: step 1/1. Its function is as follows. Oxidative deamination of D-amino acids. This Methylobacterium nodulans (strain LMG 21967 / CNCM I-2342 / ORS 2060) protein is D-amino acid dehydrogenase.